The chain runs to 199 residues: MAKYTRLRYDVTEVPLADLVREVMGEEDLEGLAASDRVATRETDQSTPYHRRFYDNVDVISPVYRTLVHRLLGDEVDAVYIQRIPTFRVHLRNSVAVGSWHRDRDFGHDPSEVNYWVPLTRAYGNNTLWIDEEPVHAEYGEVIVFDGANSWHGNVVNDTETSRVSMDFRTLPRSSYEPNDRKSISYGLPFRLGEYWDTV.

It participates in antibiotic biosynthesis; streptomycin biosynthesis. In terms of biological role, may be involved in the formation of N-methyl-L-glucosamine. The polypeptide is Streptomycin biosynthesis protein StrG (strG) (Streptomyces griseus).